Reading from the N-terminus, the 925-residue chain is Bifunctional imidazolonepropionase/histidine ammonia-lyase (925 aa).

Residues Met-1–Phe-414 form an imidazolonepropionase region. Fe(3+)-binding residues include His-73 and His-75. Zn(2+) is bound by residues His-73 and His-75. 4-imidazolone-5-propanoate is bound by residues Arg-82, Tyr-145, and His-178. Residue Tyr-145 coordinates N-formimidoyl-L-glutamate. His-243 is a binding site for Fe(3+). His-243 contributes to the Zn(2+) binding site. Gln-246 is a binding site for 4-imidazolone-5-propanoate. Asp-318 provides a ligand contact to Fe(3+). Asp-318 lines the Zn(2+) pocket. Asn-320 and Gly-322 together coordinate N-formimidoyl-L-glutamate. Thr-323 contributes to the 4-imidazolone-5-propanoate binding site. The segment at Met-415–Ala-925 is histidine ammonia-lyase. Positions Ala-556–Gly-558 form a cross-link, 5-imidazolinone (Ala-Gly). A 2,3-didehydroalanine (Ser) modification is found at Ser-557.

The protein in the N-terminal section; belongs to the metallo-dependent hydrolases superfamily. HutI family. It in the C-terminal section; belongs to the PAL/histidase family. Requires Zn(2+) as cofactor. The cofactor is Fe(3+). Contains an active site 4-methylidene-imidazol-5-one (MIO), which is formed autocatalytically by cyclization and dehydration of residues Ala-Ser-Gly.

The protein resides in the cytoplasm. It catalyses the reaction 4-imidazolone-5-propanoate + H2O = N-formimidoyl-L-glutamate. The enzyme catalyses L-histidine = trans-urocanate + NH4(+). The protein operates within amino-acid degradation; L-histidine degradation into L-glutamate; N-formimidoyl-L-glutamate from L-histidine: step 1/3. It functions in the pathway amino-acid degradation; L-histidine degradation into L-glutamate; N-formimidoyl-L-glutamate from L-histidine: step 3/3. Its function is as follows. Catalyzes the hydrolytic cleavage of the carbon-nitrogen bond in imidazolone-5-propanoate to yield N-formimidoyl-L-glutamate. It is the third step in the universal histidine degradation pathway. In Brucella melitensis biotype 1 (strain ATCC 23456 / CCUG 17765 / NCTC 10094 / 16M), this protein is Bifunctional imidazolonepropionase/histidine ammonia-lyase (hutIH).